A 710-amino-acid chain; its full sequence is MGNSGSKQHTKHNSKKDDHDGDRKKTLDLPPLTKSDTTHSLKSSRSLRSLRSKRSEASLASNVQAQTQPLSRRSSTLGNGNRNHRRSNNAPITPPNNHYLTSHPSSSRRLSSSSRRSSMGNNNNSELPPSMIQMEPKSPILKNSTSMHSTSSFNSYENALTDDDDDRGDDGGESPSMAKVTRINTSSSADRGSKRTPLRRHNSLQPEKGVTGFSSTSSKLRRRSDNTLPASYPLNAEAGGNGSDYFSNRSNSHASSRKSSFGSTGNTAYSTPLHSPALRKMSSRDNDDSGDNVNGRGTSPIPNLNIDKPSPSASSASKREYLSAYPTLAHRDSSSSLSPRGKGQRSSSSSSSSQRIYVSPPSPTGDFVHGSCADGDNGSRTNTMVEMKRKKPVRPVDIDEIIQRLLDAGYAAKRTKNVCLKNSEIIQICHKARELFLAQPALLELSPSVKIVGDVHGQYADLLRLFTKCGFPPMANYLFLGDYVDRGKQSLETILLLLCYKIKYPENFFLLRGNHECANVTRVYGFYDECKRRCNIKIWKTFVDTFNTLPLAAIVTGKIFCVHGGLSPVLNSMDEIRHVSRPTDVPDFGLINDLLWSDPTDSSNEWEDNERGVSFCYNKVAINKFLNKFGFDLVCRAHMVVEDGYEFFNDRSLVTVFSAPNYCGEFDNWGAVMTVSEGLLCSFELLDPLDSTALKQVMKKGRQERKLANR.

Positions 1 to 382 (MGNSGSKQHT…ADGDNGSRTN (382 aa)) are disordered. Glycine 2 carries the N-myristoyl glycine lipid modification. Positions 15–27 (KKDDHDGDRKKTL) are enriched in basic and acidic residues. Positions 40–49 (SLKSSRSLRS) are enriched in low complexity. Residues serine 55 and serine 71 each carry the phosphoserine modification. 2 stretches are compositionally biased toward polar residues: residues 62-77 (NVQA…SSTL) and 95-104 (PNNHYLTSHP). Low complexity-rich tracts occupy residues 105 to 125 (SSSR…NNNS) and 143 to 155 (NSTS…SFNS). Over residues 160-172 (LTDDDDDRGDDGG) the composition is skewed to acidic residues. Threonine 161 carries the post-translational modification Phosphothreonine. Phosphoserine occurs at positions 203 and 224. The span at 247–260 (SNRSNSHASSRKSS) shows a compositional bias: low complexity. The segment covering 261–273 (FGSTGNTAYSTPL) has biased composition (polar residues). Threonine 271 is modified (phosphothreonine). The residue at position 275 (serine 275) is a Phosphoserine. The segment covering 291 to 302 (DNVNGRGTSPIP) has biased composition (polar residues). Serine 310 carries the phosphoserine modification. The Mn(2+) site is built by aspartate 454, histidine 456, aspartate 482, and asparagine 514. The active-site Proton donor is histidine 515. Residues histidine 563 and histidine 638 each coordinate Mn(2+).

The protein belongs to the PPP phosphatase family. PP-Z subfamily. It depends on Mn(2+) as a cofactor.

The catalysed reaction is O-phospho-L-seryl-[protein] + H2O = L-seryl-[protein] + phosphate. It catalyses the reaction O-phospho-L-threonyl-[protein] + H2O = L-threonyl-[protein] + phosphate. Functionally, essential for the maintenance of cell size and integrity in response to osmotic stress. The protein is Serine/threonine-protein phosphatase PP-Z2 (PPZ2) of Saccharomyces cerevisiae (strain ATCC 204508 / S288c) (Baker's yeast).